The primary structure comprises 378 residues: Protein RecA (378 aa).

66–73 (GPESSGKT) is an ATP binding site. Residues 333-378 (PDAAKAEAATDAAAAADTAGTDDAAKSVPAPASKTAKATKATAVKS) are disordered. Positions 338 to 378 (AEAATDAAAAADTAGTDDAAKSVPAPASKTAKATKATAVKS) are enriched in low complexity.

The protein belongs to the RecA family.

Its subcellular location is the cytoplasm. Its function is as follows. Can catalyze the hydrolysis of ATP in the presence of single-stranded DNA, the ATP-dependent uptake of single-stranded DNA by duplex DNA, and the ATP-dependent hybridization of homologous single-stranded DNAs. It interacts with LexA causing its activation and leading to its autocatalytic cleavage. The protein is Protein RecA of Streptomyces venezuelae (strain ATCC 10712 / CBS 650.69 / DSM 40230 / JCM 4526 / NBRC 13096 / PD 04745).